Consider the following 312-residue polypeptide: Methionyl-tRNA formyltransferase (312 aa).

117–120 contributes to the (6S)-5,6,7,8-tetrahydrofolate binding site; it reads SLLP.

Belongs to the Fmt family.

The catalysed reaction is L-methionyl-tRNA(fMet) + (6R)-10-formyltetrahydrofolate = N-formyl-L-methionyl-tRNA(fMet) + (6S)-5,6,7,8-tetrahydrofolate + H(+). In terms of biological role, attaches a formyl group to the free amino group of methionyl-tRNA(fMet). The formyl group appears to play a dual role in the initiator identity of N-formylmethionyl-tRNA by promoting its recognition by IF2 and preventing the misappropriation of this tRNA by the elongation apparatus. In Bordetella pertussis (strain Tohama I / ATCC BAA-589 / NCTC 13251), this protein is Methionyl-tRNA formyltransferase.